Reading from the N-terminus, the 203-residue chain is Urease accessory protein UreG (203 aa).

A GTP-binding site is contributed by glycine 12–threonine 19.

The protein belongs to the SIMIBI class G3E GTPase family. UreG subfamily. As to quaternary structure, homodimer. UreD, UreF and UreG form a complex that acts as a GTP-hydrolysis-dependent molecular chaperone, activating the urease apoprotein by helping to assemble the nickel containing metallocenter of UreC. The UreE protein probably delivers the nickel.

It is found in the cytoplasm. In terms of biological role, facilitates the functional incorporation of the urease nickel metallocenter. This process requires GTP hydrolysis, probably effectuated by UreG. The polypeptide is Urease accessory protein UreG (Alteromonas mediterranea (strain DSM 17117 / CIP 110805 / LMG 28347 / Deep ecotype)).